Reading from the N-terminus, the 95-residue chain is MLKSNNASETATSKGVDKAAKKVFFRRRKGCPLSVPNAPVIDYKNPELLIKFVSEGGRMLPSRITNVCAKKQRKLNNAIKIARILALLPFVFQAK.

Belongs to the bacterial ribosomal protein bS18 family. Part of the 30S ribosomal subunit. Forms a tight heterodimer with protein bS6.

Binds as a heterodimer with protein bS6 to the central domain of the 16S rRNA, where it helps stabilize the platform of the 30S subunit. This is Small ribosomal subunit protein bS18 from Rickettsia prowazekii (strain Madrid E).